Reading from the N-terminus, the 357-residue chain is UDP-N-acetylglucosamine--N-acetylmuramyl-(pentapeptide) pyrophosphoryl-undecaprenol N-acetylglucosamine transferase (357 aa).

Residues 12–14 (TGG), N124, R162, S190, I244, 263–268 (ALTVAE), and Q289 contribute to the UDP-N-acetyl-alpha-D-glucosamine site.

The protein belongs to the glycosyltransferase 28 family. MurG subfamily.

It is found in the cell inner membrane. It carries out the reaction di-trans,octa-cis-undecaprenyl diphospho-N-acetyl-alpha-D-muramoyl-L-alanyl-D-glutamyl-meso-2,6-diaminopimeloyl-D-alanyl-D-alanine + UDP-N-acetyl-alpha-D-glucosamine = di-trans,octa-cis-undecaprenyl diphospho-[N-acetyl-alpha-D-glucosaminyl-(1-&gt;4)]-N-acetyl-alpha-D-muramoyl-L-alanyl-D-glutamyl-meso-2,6-diaminopimeloyl-D-alanyl-D-alanine + UDP + H(+). The protein operates within cell wall biogenesis; peptidoglycan biosynthesis. Cell wall formation. Catalyzes the transfer of a GlcNAc subunit on undecaprenyl-pyrophosphoryl-MurNAc-pentapeptide (lipid intermediate I) to form undecaprenyl-pyrophosphoryl-MurNAc-(pentapeptide)GlcNAc (lipid intermediate II). The polypeptide is UDP-N-acetylglucosamine--N-acetylmuramyl-(pentapeptide) pyrophosphoryl-undecaprenol N-acetylglucosamine transferase (Alkalilimnicola ehrlichii (strain ATCC BAA-1101 / DSM 17681 / MLHE-1)).